The primary structure comprises 127 residues: Glycine cleavage system H protein (127 aa).

Positions 22–104 (NVRIGITDYA…YDKAWMIVVK (83 aa)) constitute a Lipoyl-binding domain. K63 is modified (N6-lipoyllysine).

The protein belongs to the GcvH family. The glycine cleavage system is composed of four proteins: P, T, L and H. (R)-lipoate is required as a cofactor.

In terms of biological role, the glycine cleavage system catalyzes the degradation of glycine. The H protein shuttles the methylamine group of glycine from the P protein to the T protein. Functionally, is also involved in protein lipoylation via its role as an octanoyl/lipoyl carrier protein intermediate. The chain is Glycine cleavage system H protein from Geobacillus kaustophilus (strain HTA426).